Reading from the N-terminus, the 295-residue chain is Putative clathrin assembly protein At5g65370 (295 aa).

One can recognise an ENTH domain in the interval 26 to 169 (CSSVNAKTID…SIAEVLGITP (144 aa)).

The protein resides in the membrane. The protein localises to the clathrin-coated pit. It localises to the golgi apparatus. Its subcellular location is the cytoplasmic vesicle. It is found in the clathrin-coated vesicle. The polypeptide is Putative clathrin assembly protein At5g65370 (Arabidopsis thaliana (Mouse-ear cress)).